The following is a 154-amino-acid chain: uncharacterized protein (154 aa).

The N-terminal 42 residues, 1-42 (MLRVIWKHSSRVTRSIELSNISTTNHTRSLRRLSWISPRRFY), are a transit peptide targeting the mitochondrion.

The protein resides in the mitochondrion. This is an uncharacterized protein from Saccharomyces cerevisiae (strain ATCC 204508 / S288c) (Baker's yeast).